Consider the following 258-residue polypeptide: tRNA pseudouridine synthase A (258 aa).

The Nucleophile role is filled by Asp-54. Tyr-112 lines the substrate pocket.

Belongs to the tRNA pseudouridine synthase TruA family. As to quaternary structure, homodimer.

It catalyses the reaction uridine(38/39/40) in tRNA = pseudouridine(38/39/40) in tRNA. In terms of biological role, formation of pseudouridine at positions 38, 39 and 40 in the anticodon stem and loop of transfer RNAs. In Geobacillus kaustophilus (strain HTA426), this protein is tRNA pseudouridine synthase A.